A 357-amino-acid chain; its full sequence is Ribosomal RNA large subunit methyltransferase M (357 aa).

Residues Ser190, 223-226, Asp242, Asp262, and Asp278 each bind S-adenosyl-L-methionine; that span reads APGG. Lys307 serves as the catalytic Proton acceptor.

Belongs to the class I-like SAM-binding methyltransferase superfamily. RNA methyltransferase RlmE family. RlmM subfamily. As to quaternary structure, monomer.

The protein localises to the cytoplasm. The catalysed reaction is cytidine(2498) in 23S rRNA + S-adenosyl-L-methionine = 2'-O-methylcytidine(2498) in 23S rRNA + S-adenosyl-L-homocysteine + H(+). Its function is as follows. Catalyzes the 2'-O-methylation at nucleotide C2498 in 23S rRNA. In Chromohalobacter salexigens (strain ATCC BAA-138 / DSM 3043 / CIP 106854 / NCIMB 13768 / 1H11), this protein is Ribosomal RNA large subunit methyltransferase M.